The primary structure comprises 401 residues: Argininosuccinate synthase (401 aa).

9–17 contributes to the ATP binding site; sequence AYSGGLDTS. Tyr86 contacts L-citrulline. Position 116 (Gly116) interacts with ATP. L-aspartate-binding residues include Thr118, Asn122, and Asp123. Position 122 (Asn122) interacts with L-citrulline. L-citrulline-binding residues include Arg126, Ser174, Ser183, Glu259, and Tyr271.

It belongs to the argininosuccinate synthase family. Type 1 subfamily. As to quaternary structure, homotetramer.

The protein resides in the cytoplasm. The enzyme catalyses L-citrulline + L-aspartate + ATP = 2-(N(omega)-L-arginino)succinate + AMP + diphosphate + H(+). It functions in the pathway amino-acid biosynthesis; L-arginine biosynthesis; L-arginine from L-ornithine and carbamoyl phosphate: step 2/3. In Bacillus thuringiensis (strain Al Hakam), this protein is Argininosuccinate synthase.